Consider the following 192-residue polypeptide: 3-hydroxyanthranilate 3,4-dioxygenase 1 (192 aa).

Arg-50 is a binding site for O2. The Fe cation site is built by His-54, Glu-60, and His-102. Residue Glu-60 participates in substrate binding. Residues Arg-106 and Glu-116 each coordinate substrate. The a divalent metal cation site is built by Cys-131, Cys-134, Cys-168, and Cys-171.

This sequence belongs to the 3-HAO family. Fe(2+) is required as a cofactor.

Its subcellular location is the cytoplasm. It catalyses the reaction 3-hydroxyanthranilate + O2 = (2Z,4Z)-2-amino-3-carboxymuconate 6-semialdehyde. Its pathway is cofactor biosynthesis; NAD(+) biosynthesis; quinolinate from L-kynurenine: step 3/3. Catalyzes the oxidative ring opening of 3-hydroxyanthranilate to 2-amino-3-carboxymuconate semialdehyde, which spontaneously cyclizes to quinolinate. In Aspergillus clavatus (strain ATCC 1007 / CBS 513.65 / DSM 816 / NCTC 3887 / NRRL 1 / QM 1276 / 107), this protein is 3-hydroxyanthranilate 3,4-dioxygenase 1 (bna1-1).